Here is a 151-residue protein sequence, read N- to C-terminus: Succinate dehydrogenase subunit 4, mitochondrial (151 aa).

The transit peptide at 1–78 (MSLRRTILDL…RSISSSIGQS (78 aa)) directs the protein to the mitochondrion. Position 109 (His109) interacts with heme. A ubiquinone is bound at residue Tyr121. The chain crosses the membrane as a helical span at residues 130-150 (LIVMSLGLFQIIVLKDIILFL).

In terms of assembly, component of complex II composed of eight subunits in plants: four classical SDH subunits SDH1, SDH2, SDH3 and SDH4 (a flavoprotein (FP), an iron-sulfur protein (IP), and a cytochrome b composed of a large and a small subunit.), as well as four subunits unknown in mitochondria from bacteria and heterotrophic eukaryotes. The cofactor is heme. Expressed in flowers, inflorescences and stems.

It is found in the mitochondrion inner membrane. It functions in the pathway carbohydrate metabolism; tricarboxylic acid cycle. Its function is as follows. Membrane-anchoring subunit of succinate dehydrogenase (SDH). In Arabidopsis thaliana (Mouse-ear cress), this protein is Succinate dehydrogenase subunit 4, mitochondrial.